The primary structure comprises 258 residues: Large ribosomal subunit protein bL21 (258 aa).

Residues 140–159 (KAKDAKDEAPKAAPKAEKKK) show a composition bias toward basic and acidic residues. A disordered region spans residues 140–181 (KAKDAKDEAPKAAPKAEKKKAAPKKAKAEAAPAAADEGTRPA).

Belongs to the bacterial ribosomal protein bL21 family. In terms of assembly, part of the 50S ribosomal subunit. Contacts protein L20.

Functionally, this protein binds to 23S rRNA in the presence of protein L20. The polypeptide is Large ribosomal subunit protein bL21 (Jannaschia sp. (strain CCS1)).